A 183-amino-acid chain; its full sequence is UPF0200 protein Memar_1556 (183 aa).

Residue 8-15 (GMPASGKG) coordinates ATP.

It belongs to the UPF0200 family.

The chain is UPF0200 protein Memar_1556 from Methanoculleus marisnigri (strain ATCC 35101 / DSM 1498 / JR1).